Reading from the N-terminus, the 180-residue chain is Trafficking protein particle complex subunit 3 (180 aa).

C68 carries the S-palmitoyl cysteine lipid modification.

The protein belongs to the TRAPP small subunits family. BET3 subfamily. As to quaternary structure, homodimer. Part of the multisubunit TRAPP (transport protein particle) complex.

Its subcellular location is the golgi apparatus. The protein resides in the cis-Golgi network. It is found in the endoplasmic reticulum. Its function is as follows. May play a role in vesicular transport from endoplasmic reticulum to Golgi. The protein is Trafficking protein particle complex subunit 3 (TRAPPC3) of Gallus gallus (Chicken).